The following is a 342-amino-acid chain: Putative anthocyanidin reductase (342 aa).

NADP(+) is bound by residues Arg-44, Lys-51, 71 to 72 (EL), 91 to 93 (VAT), Tyr-172, Lys-176, 199 to 202 (PVLV), and Ser-214. Catalysis depends on Lys-176, which acts as the Proton donor.

This sequence belongs to the NAD(P)-dependent epimerase/dehydratase family. Dihydroflavonol-4-reductase subfamily. In terms of tissue distribution, highly expressed in leaves and weakly in stems. Not expressed in roots.

Its pathway is secondary metabolite biosynthesis; flavonoid biosynthesis. The protein is Putative anthocyanidin reductase of Ginkgo biloba (Ginkgo).